A 310-amino-acid chain; its full sequence is p-hydroxybenzoic acid efflux pump subunit AaeA (310 aa).

A helical membrane pass occupies residues 12-32; the sequence is AITVALVILAFIAISRAWVFY.

Belongs to the membrane fusion protein (MFP) (TC 8.A.1) family.

It localises to the cell inner membrane. Functionally, forms an efflux pump with AaeB. This is p-hydroxybenzoic acid efflux pump subunit AaeA from Enterobacter sp. (strain 638).